Consider the following 215-residue polypeptide: ATP-dependent Clp protease proteolytic subunit (215 aa).

Ser-115 acts as the Nucleophile in catalysis. His-140 is an active-site residue.

It belongs to the peptidase S14 family. As to quaternary structure, fourteen ClpP subunits assemble into 2 heptameric rings which stack back to back to give a disk-like structure with a central cavity, resembling the structure of eukaryotic proteasomes.

Its subcellular location is the cytoplasm. It carries out the reaction Hydrolysis of proteins to small peptides in the presence of ATP and magnesium. alpha-casein is the usual test substrate. In the absence of ATP, only oligopeptides shorter than five residues are hydrolyzed (such as succinyl-Leu-Tyr-|-NHMec, and Leu-Tyr-Leu-|-Tyr-Trp, in which cleavage of the -Tyr-|-Leu- and -Tyr-|-Trp bonds also occurs).. Its function is as follows. Cleaves peptides in various proteins in a process that requires ATP hydrolysis. Has a chymotrypsin-like activity. Plays a major role in the degradation of misfolded proteins. The chain is ATP-dependent Clp protease proteolytic subunit from Anaplasma marginale (strain Florida).